We begin with the raw amino-acid sequence, 390 residues long: GTPase Obg (390 aa).

The Obg domain maps to 1-159 (MKFVDEASIL…RELLLELMLL (159 aa)). Positions 127–147 (NTRFKSSVNRTPRQKTNGTPG) are disordered. The segment covering 129–145 (RFKSSVNRTPRQKTNGT) has biased composition (polar residues). The OBG-type G domain maps to 160–333 (ADVGMLGMPN…LCWDVMTFII (174 aa)). Residues 166–173 (GMPNAGKS), 191–195 (FTTLV), 213–216 (DIPG), 283–286 (NKID), and 314–316 (SAA) each bind GTP. Positions 173 and 193 each coordinate Mg(2+).

This sequence belongs to the TRAFAC class OBG-HflX-like GTPase superfamily. OBG GTPase family. In terms of assembly, monomer. Mg(2+) serves as cofactor.

The protein resides in the cytoplasm. Its function is as follows. An essential GTPase which binds GTP, GDP and possibly (p)ppGpp with moderate affinity, with high nucleotide exchange rates and a fairly low GTP hydrolysis rate. Plays a role in control of the cell cycle, stress response, ribosome biogenesis and in those bacteria that undergo differentiation, in morphogenesis control. The chain is GTPase Obg from Escherichia fergusonii (strain ATCC 35469 / DSM 13698 / CCUG 18766 / IAM 14443 / JCM 21226 / LMG 7866 / NBRC 102419 / NCTC 12128 / CDC 0568-73).